The sequence spans 89 residues: Small ribosomal subunit protein uS15 (89 aa).

Positions 1–11 are enriched in basic and acidic residues; that stretch reads MSIAAERKAEV. Residues 1-24 form a disordered region; that stretch reads MSIAAERKAEVIKTNATKAGDTGS.

The protein belongs to the universal ribosomal protein uS15 family. In terms of assembly, part of the 30S ribosomal subunit. Forms a bridge to the 50S subunit in the 70S ribosome, contacting the 23S rRNA.

One of the primary rRNA binding proteins, it binds directly to 16S rRNA where it helps nucleate assembly of the platform of the 30S subunit by binding and bridging several RNA helices of the 16S rRNA. Its function is as follows. Forms an intersubunit bridge (bridge B4) with the 23S rRNA of the 50S subunit in the ribosome. The polypeptide is Small ribosomal subunit protein uS15 (Bradyrhizobium diazoefficiens (strain JCM 10833 / BCRC 13528 / IAM 13628 / NBRC 14792 / USDA 110)).